Here is a 429-residue protein sequence, read N- to C-terminus: MEKLVIRGGKPLSGTVSVSGSKNSALAIMAAALLPASGKTVIHRVPNLRDVHTLSNLLRIIGAKVDFEAHTLSIASGDISHYEAPYELVKKMRASIYVLGPLLGRFGRAKVSLPGGCAFGPRPVDLHIESMKKLGADIKLEDGYIIAKTKRKGLSGAKIDFRISSVGATGNTLMAAALAKGTTCLTNAALEPEIVYLCEFLEKMGAKISGIGTTTLEIEGVDELYPIRADNICDRIEAGTLLAAAAITHGNITLTDVDPDHLTAILEKFKEIGCEVSTTETAITLSAPETLLPSNVEALPYPKFPTDMQAQWIALMTQANGISQIIDQVYTERFNHVPELNRLGGEITVKNNMATVHGVKPLSGAKVMSTDLRASASLILAGLAAKGTTEVLRVYHLDRGYESIEKKLRKLGARIRRQTYDEFAQPQLT.

22-23 (KN) provides a ligand contact to phosphoenolpyruvate. R93 is a binding site for UDP-N-acetyl-alpha-D-glucosamine. C117 functions as the Proton donor in the catalytic mechanism. C117 carries the post-translational modification 2-(S-cysteinyl)pyruvic acid O-phosphothioketal. UDP-N-acetyl-alpha-D-glucosamine-binding positions include 122–126 (RPVDL), D307, and V329.

Belongs to the EPSP synthase family. MurA subfamily.

Its subcellular location is the cytoplasm. The enzyme catalyses phosphoenolpyruvate + UDP-N-acetyl-alpha-D-glucosamine = UDP-N-acetyl-3-O-(1-carboxyvinyl)-alpha-D-glucosamine + phosphate. Its pathway is cell wall biogenesis; peptidoglycan biosynthesis. Cell wall formation. Adds enolpyruvyl to UDP-N-acetylglucosamine. This chain is UDP-N-acetylglucosamine 1-carboxyvinyltransferase, found in Chloroherpeton thalassium (strain ATCC 35110 / GB-78).